We begin with the raw amino-acid sequence, 706 residues long: Probable protein S-acyltransferase 20 (706 aa).

Transmembrane regions (helical) follow at residues 16-36 (VIAITVFCLLVVAFYAFFAPF) and 41-61 (IWEYVLIGVYSPVAILVFVLY). In terms of domain architecture, DHHC spans 172–222 (LFCTLCNCEVRKFSKHCRSCDKCVDCFDHHCKWLNNCVGRKNYVTFVSLMS). Catalysis depends on Cys-202, which acts as the S-palmitoyl cysteine intermediate. 2 consecutive transmembrane segments (helical) span residues 220-240 (LMSASLLWLIIEAAVGIAVIV) and 275-295 (AVAIFACFPLGELLFFHMLLI). Disordered stretches follow at residues 470-505 (SSLSRNSFAPSQGSRDEYDTGSHGMSNLSSPSHVHE), 591-621 (LNPSSQTASTQNPRPILPAHDSSSGSSALRD), and 680-706 (RDSTSNQLPVFAPGGLGANSQTGSNIK). 3 stretches are compositionally biased toward polar residues: residues 492–501 (HGMSNLSSPS), 591–603 (LNPSSQTASTQNP), and 697–706 (ANSQTGSNIK).

The protein belongs to the DHHC palmitoyltransferase family.

The protein resides in the cell membrane. Its subcellular location is the cytoplasmic vesicle membrane. The catalysed reaction is L-cysteinyl-[protein] + hexadecanoyl-CoA = S-hexadecanoyl-L-cysteinyl-[protein] + CoA. In terms of biological role, palmitoyl acyltransferase. This chain is Probable protein S-acyltransferase 20 (PAT20), found in Arabidopsis thaliana (Mouse-ear cress).